The following is a 312-amino-acid chain: D-alanine--D-alanine ligase (312 aa).

Positions 108–308 constitute an ATP-grasp domain; it reads KLVWQQTGIP…YSELVVKVLS (201 aa). 138–193 is a binding site for ATP; that stretch reads VAKLGVPLFVKPASEGSSVAVEKVKSADALPAALEEAAKHDKIVIVEKSIEGGGEY. Asp262, Glu275, and Asn277 together coordinate Mg(2+).

It belongs to the D-alanine--D-alanine ligase family. It depends on Mg(2+) as a cofactor. Requires Mn(2+) as cofactor.

It is found in the cytoplasm. The enzyme catalyses 2 D-alanine + ATP = D-alanyl-D-alanine + ADP + phosphate + H(+). It participates in cell wall biogenesis; peptidoglycan biosynthesis. In terms of biological role, cell wall formation. The protein is D-alanine--D-alanine ligase of Burkholderia mallei (strain NCTC 10247).